The chain runs to 151 residues: Small ribosomal subunit protein uS15 (151 aa).

At Ser32 the chain carries Phosphoserine. Glycyl lysine isopeptide (Lys-Gly) (interchain with G-Cter in ubiquitin) cross-links involve residues Lys39 and Lys43.

The protein belongs to the universal ribosomal protein uS15 family. In terms of assembly, component of the small ribosomal subunit (SSU). Mature yeast ribosomes consist of a small (40S) and a large (60S) subunit. The 40S small subunit contains 1 molecule of ribosomal RNA (18S rRNA) and 33 different proteins (encoded by 57 genes). The large 60S subunit contains 3 rRNA molecules (25S, 5.8S and 5S rRNA) and 46 different proteins (encoded by 81 genes).

The protein localises to the cytoplasm. Component of the ribosome, a large ribonucleoprotein complex responsible for the synthesis of proteins in the cell. The small ribosomal subunit (SSU) binds messenger RNAs (mRNAs) and translates the encoded message by selecting cognate aminoacyl-transfer RNA (tRNA) molecules. The large subunit (LSU) contains the ribosomal catalytic site termed the peptidyl transferase center (PTC), which catalyzes the formation of peptide bonds, thereby polymerizing the amino acids delivered by tRNAs into a polypeptide chain. The nascent polypeptides leave the ribosome through a tunnel in the LSU and interact with protein factors that function in enzymatic processing, targeting, and the membrane insertion of nascent chains at the exit of the ribosomal tunnel. The chain is Small ribosomal subunit protein uS15 from Saccharomyces cerevisiae (strain ATCC 204508 / S288c) (Baker's yeast).